Consider the following 299-residue polypeptide: Probable lipid kinase YegS (299 aa).

The DAGKc domain occupies Ala-2–Thr-133. ATP-binding positions include Thr-40, Gly-66 to Glu-72, and Thr-95. 3 residues coordinate Mg(2+): Leu-215, Asp-218, and Leu-220. Glu-271 acts as the Proton acceptor in catalysis.

This sequence belongs to the diacylglycerol/lipid kinase family. YegS lipid kinase subfamily. Mg(2+) is required as a cofactor. Requires Ca(2+) as cofactor.

The protein resides in the cytoplasm. Functionally, probably phosphorylates lipids; the in vivo substrate is unknown. The chain is Probable lipid kinase YegS from Escherichia coli O6:K15:H31 (strain 536 / UPEC).